A 456-amino-acid polypeptide reads, in one-letter code: Ribonuclease inhibitor (456 aa).

The residue at position 1 (methionine 1) is an N-acetylmethionine. LRR repeat units follow at residues 15 to 43, 44 to 71, 72 to 100, 101 to 128, 129 to 157, 158 to 185, 186 to 214, 215 to 242, 243 to 271, 272 to 299, 300 to 328, 329 to 356, 357 to 385, 386 to 413, and 414 to 442; these read WTEL…CKDI, GSAL…VHLV, LQGL…CGVL, PSTL…LRLL, CEGL…CEPL, ASVL…ARVL, GQGL…CKDL, CGIV…IAEL, CPGL…CRDL, CRVL…ARLL, CESL…CQHV, SLML…IQEL, CQAL…CSSL, ASLL…VLQL, and LGSL…EDRL. Residue serine 86 is modified to Phosphoserine.

Forms high-affinity heterodimers with RNASE1, ANG and RNASE2.

It is found in the cytoplasm. The protein resides in the nucleus. Functionally, ribonuclease inhibitor which inhibits RNASE1, RNASE2 and angiogenin (ANG). May play a role in redox homeostasis. Required to inhibit the cytotoxic tRNA ribonuclease activity of ANG in the cytoplasm in absence of stress. Relocates to the nucleus in response to stress, relieving inhibition of ANG in the cytoplasm, and inhibiting the angiogenic activity of ANG in the nucleus. The chain is Ribonuclease inhibitor (RNH1) from Sus scrofa (Pig).